Here is a 283-residue protein sequence, read N- to C-terminus: Pantothenate synthetase (283 aa).

Position 30-37 (30-37) interacts with ATP; that stretch reads MGALHEGH. Histidine 37 functions as the Proton donor in the catalytic mechanism. Glutamine 61 lines the (R)-pantoate pocket. Residue glutamine 61 participates in beta-alanine binding. 147–150 lines the ATP pocket; that stretch reads GMKD. Residue glutamine 153 coordinates (R)-pantoate. Residues valine 176 and 184 to 187 contribute to the ATP site; that span reads LSSR.

It belongs to the pantothenate synthetase family. As to quaternary structure, homodimer.

It localises to the cytoplasm. It catalyses the reaction (R)-pantoate + beta-alanine + ATP = (R)-pantothenate + AMP + diphosphate + H(+). It functions in the pathway cofactor biosynthesis; (R)-pantothenate biosynthesis; (R)-pantothenate from (R)-pantoate and beta-alanine: step 1/1. Catalyzes the condensation of pantoate with beta-alanine in an ATP-dependent reaction via a pantoyl-adenylate intermediate. This is Pantothenate synthetase from Endomicrobium trichonymphae.